Here is a 317-residue protein sequence, read N- to C-terminus: Cold tolerance protein 1 (317 aa).

It belongs to the CTO1 family.

Its function is as follows. Protein required for cold tolerance. Plays a role in the regulation of phosphate uptake. The polypeptide is Cold tolerance protein 1 (Saccharomyces cerevisiae (strain ATCC 204508 / S288c) (Baker's yeast)).